The sequence spans 636 residues: Chaperone protein HtpG (636 aa).

The interval Met1–Arg329 is a; substrate-binding. Residues Glu330 to Lys550 are b. Residues Leu551–Leu636 are c.

This sequence belongs to the heat shock protein 90 family. As to quaternary structure, homodimer.

The protein localises to the cytoplasm. Its function is as follows. Molecular chaperone. Has ATPase activity. The chain is Chaperone protein HtpG from Oleidesulfovibrio alaskensis (strain ATCC BAA-1058 / DSM 17464 / G20) (Desulfovibrio alaskensis).